Consider the following 214-residue polypeptide: Cell division protein DamX (214 aa).

2 stretches are compositionally biased toward polar residues: residues 1 to 14 (GSGTPTEAQTQPQQ) and 43 to 53 (QGMTGAASTLP). A disordered region spans residues 1–133 (GSGTPTEAQT…SVQSAPGSHY (133 aa)). A helical membrane pass occupies residues 44–65 (GMTGAASTLPTAPATVMSGAAA). Low complexity-rich tracts occupy residues 78-97 (QQHKTPAKTAAAKPTATQHK) and 110-131 (SSTAKAGAVASSGSSVQSAPGS). One can recognise an SPOR domain in the interval 127–204 (SAPGSHYTLQ…VQAKKPWVRP (78 aa)).

It belongs to the DamX family.

The protein localises to the cell inner membrane. Its function is as follows. Non-essential cell division protein. This chain is Cell division protein DamX, found in Serratia marcescens.